The chain runs to 356 residues: MLYWLAEWLGFPGALNLIRYLSFRSGAAVATAMILGLWIGPRFILMLRMRQGKGQPIRDDGPQSHLAKKGTPTMGGLMILISLMISALLWMDLSNRFVWACLFVTAGFAVVGFLDDYDKVTKSSHRGIPGRVRLLVEFLIAGVAVLLIVSRTGTDLYLPFFSGIVIPLGPFYYVFAMVLIVGFGNAVNLTDGLDGLATFPVIIASLTFLVIVYLSGNVKFAGYLGIPHVPGAGELAVFAAAIIGACLAFLWFNAPPAAVFMGDTGSLALGGALATIAVTAQHELVLVLVGGLFVVEALSVIIQVFWYKRTGKRVFRMAPIHHHFEQLGWPESTVVIRFWIVSIVLALAGLATLKLR.

The next 10 membrane-spanning stretches (helical) occupy residues 27–47 (AAVA…ILML), 73–93 (TMGG…WMDL), 97–117 (FVWA…LDDY), 134–154 (LLVE…RTGT), 163–183 (GIVI…IVGF), 195–215 (GLAT…VYLS), 232–252 (AGEL…FLWF), 258–278 (AVFM…TIAV), 285–305 (VLVL…IQVF), and 333–353 (TVVI…LATL).

The protein belongs to the glycosyltransferase 4 family. MraY subfamily. It depends on Mg(2+) as a cofactor.

The protein resides in the cell inner membrane. It carries out the reaction UDP-N-acetyl-alpha-D-muramoyl-L-alanyl-gamma-D-glutamyl-meso-2,6-diaminopimeloyl-D-alanyl-D-alanine + di-trans,octa-cis-undecaprenyl phosphate = di-trans,octa-cis-undecaprenyl diphospho-N-acetyl-alpha-D-muramoyl-L-alanyl-D-glutamyl-meso-2,6-diaminopimeloyl-D-alanyl-D-alanine + UMP. Its pathway is cell wall biogenesis; peptidoglycan biosynthesis. Its function is as follows. Catalyzes the initial step of the lipid cycle reactions in the biosynthesis of the cell wall peptidoglycan: transfers peptidoglycan precursor phospho-MurNAc-pentapeptide from UDP-MurNAc-pentapeptide onto the lipid carrier undecaprenyl phosphate, yielding undecaprenyl-pyrophosphoryl-MurNAc-pentapeptide, known as lipid I. In Sphingopyxis alaskensis (strain DSM 13593 / LMG 18877 / RB2256) (Sphingomonas alaskensis), this protein is Phospho-N-acetylmuramoyl-pentapeptide-transferase.